The following is a 342-amino-acid chain: HPr kinase/phosphorylase (342 aa).

Residues His153 and Lys174 contribute to the active site. An ATP-binding site is contributed by 168–175 (GKSGLGKS). Position 175 (Ser175) interacts with Mg(2+). Residue Asp192 is the Proton acceptor; for phosphorylation activity. Proton donor; for dephosphorylation activity of the active site. Residues 217 to 226 (MEIRGLGVVD) form an important for the catalytic mechanism of both phosphorylation and dephosphorylation region. Residue Glu218 participates in Mg(2+) binding. Residue Arg259 is part of the active site. An important for the catalytic mechanism of dephosphorylation region spans residues 280-285 (PIFPGK).

Belongs to the HPrK/P family. Homohexamer. Mg(2+) is required as a cofactor.

It catalyses the reaction [HPr protein]-L-serine + ATP = [HPr protein]-O-phospho-L-serine + ADP + H(+). The catalysed reaction is [HPr protein]-O-phospho-L-serine + phosphate + H(+) = [HPr protein]-L-serine + diphosphate. Its function is as follows. Catalyzes the ATP- as well as the pyrophosphate-dependent phosphorylation of a specific serine residue in HPr, a phosphocarrier protein of the phosphoenolpyruvate-dependent sugar phosphotransferase system (PTS). HprK/P also catalyzes the pyrophosphate-producing, inorganic phosphate-dependent dephosphorylation (phosphorolysis) of seryl-phosphorylated HPr (P-Ser-HPr). The polypeptide is HPr kinase/phosphorylase (Chlorobaculum tepidum (strain ATCC 49652 / DSM 12025 / NBRC 103806 / TLS) (Chlorobium tepidum)).